Here is a 687-residue protein sequence, read N- to C-terminus: MEELVGLREGASKKPVPLQELWGPCPRIRRNIQGGLEWLKERLFRVGEDWYFLVALGVLMALISYAMNFTIGRVVRAHKWLYREIGDGHLLRYLSWTVYPVALLSFSSGFSQSITPSSGGSGIPEVKTILTGVVLEDYLDIKNFGAKVVGLSCTLATGSTIFLGKLGPFVHLSVMIAAYLGRVRTKTVGEPESKTKEMELLAAGAAVGVATVFAAPISGVLFSIEVMSSHFSVWDYWRGFFAATCGAFMFHLLAVFNNEQETITSIYKTSFPVDIPFDLPEIFFFVALGAICGILSCGYNYSQRTFLFFLKANGFTSKLLATSKPLYSALAAVVLASITYPPGVGHFMASRLSMSEHLETLFDNNSWALMTKNSSPPWAAEPDPQKLWLEWCHPQLTVFGTLVFFLVMKFWMLILATTIPIPAGYFLPIFIYGAVIGRLFGEVLSVAFPEGIVAGGRVNPIMPGAYALAGAAAFSGAVTHTLSTALLAFEVTGQLVHALPVLMAVLAANAISQSFQPSFYDGTIIVKKLPYLPWIRGRQIGSHSVTVGHFMNCALTTLAKDMPLEQVIQVVISTDVTQYPLVETTESQTLVGVVKRTHLVQALQTEPASWAPGQQPCLQDILANGCPTQPVTLQLSLETSLHETHNLFELLNLQTLFVTSRGRAVGSVSWVELKKAISTLTNPPAPK.

Residues 1 to 50 (MEELVGLREGASKKPVPLQELWGPCPRIRRNIQGGLEWLKERLFRVGEDW) are Cytoplasmic-facing. 2 helical membrane passes run 51 to 82 (YFLVALGVLMALISYAMNFTIGRVVRAHKWLY) and 91 to 111 (LRYLSWTVYPVALLSFSSGFS). Residues 116–127 (PSSGGSGIPEVK) constitute an intramembrane region (helical). Ser121 serves as a coordination point for chloride. Transmembrane regions (helical) follow at residues 141–160 (IKNFGAKVVGLSCTLATGST) and 161–180 (IFLGKLGPFVHLSVMIAAYL). Residues 203–224 (AGAAVGVATVFAAPISGVLFSI) constitute an intramembrane region (helical). Residues 236 to 255 (YWRGFFAATCGAFMFHLLAV) traverse the membrane as a helical segment. Ca(2+) is bound by residues Glu259, Glu261, Asp278, and Glu281. Helical transmembrane passes span 282–310 (IFFFVALGAICGILSCGYNYSQRTFLFFL) and 325–342 (PLYSALAAVVLASITYPP). The helical intramembrane region spans 349-360 (ASRLSMSEHLET). 2 helical membrane passes run 400-420 (GTLVFFLVMKFWMLILATTIP) and 421-440 (IPAGYFLPIFIYGAVIGRLF). Phe426 provides a ligand contact to chloride. Positions 464–496 (GAYALAGAAAFSGAVTHTLSTALLAFEVTGQLV) form an intramembrane region, helical. The helical transmembrane segment at 500 to 520 (PVLMAVLAANAISQSFQPSFY) threads the bilayer. Residues 521 to 687 (DGTIIVKKLP…STLTNPPAPK (167 aa)) are Cytoplasmic-facing. 2 CBS domains span residues 551 to 609 (MNCA…EPAS) and 626 to 687 (CPTQ…PAPK).

It belongs to the chloride channel (TC 2.A.49) family. CLCNKB subfamily. As to quaternary structure, homodimer. Interacts with BSND. N-glycosylated. In terms of tissue distribution, specifically expressed in the kidney, predominantly in the outer medulla and cortex. All nephron segments expressing BSND also express CLCNK proteins.

It is found in the basolateral cell membrane. It catalyses the reaction chloride(in) = chloride(out). It carries out the reaction iodide(out) = iodide(in). The catalysed reaction is nitrate(in) = nitrate(out). The enzyme catalyses bromide(in) = bromide(out). Functionally, anion-selective channel permeable to small monovalent anions with ion selectivity for chloride &gt; bromide &gt; nitrate &gt; iodide. Forms a homodimeric channel where each subunit has its own ion conduction pathway. May conduct double-barreled currents controlled by two types of gates, two fast gates that control each subunit independently and a slow common gate that opens and shuts off both subunits simultaneously. Assembles with the regulatory subunit BSND/Barttin for sorting at the basolateral plasma membrane domain and functional switch to the ion conducting state. CLCNKB:BSND channels display mostly a linear current-voltage relationship controlled by common gate. Mediates chloride conductance along nephron segments, namely the thick ascending limb of Henle's loop, convoluted tubule and the collecting duct, contributing to the maintenance of systemic acid-base and electrolyte homeostasis. Conducts chloride currents in the stria vascularis of the inner ear to establish the endocochlear potential necessary for normal hearing. This is Chloride channel protein ClC-Kb from Mus musculus (Mouse).